We begin with the raw amino-acid sequence, 566 residues long: Oxygen-dependent choline dehydrogenase (566 aa).

Residue 7 to 36 (DYIICGAGSAGNVLATRLTEDPDVTVLLLE) coordinates FAD. The segment at 180-202 (NGYQQEGFGPMDRTVTPKGRRAS) is disordered. Residue H474 is the Proton acceptor of the active site.

The protein belongs to the GMC oxidoreductase family. FAD is required as a cofactor.

It catalyses the reaction choline + A = betaine aldehyde + AH2. It carries out the reaction betaine aldehyde + NAD(+) + H2O = glycine betaine + NADH + 2 H(+). It functions in the pathway amine and polyamine biosynthesis; betaine biosynthesis via choline pathway; betaine aldehyde from choline (cytochrome c reductase route): step 1/1. Involved in the biosynthesis of the osmoprotectant glycine betaine. Catalyzes the oxidation of choline to betaine aldehyde and betaine aldehyde to glycine betaine at the same rate. This is Oxygen-dependent choline dehydrogenase from Burkholderia cenocepacia (strain HI2424).